The following is a 225-amino-acid chain: Dynein axonemal assembly factor 19 (225 aa).

Residues aspartate 8–alanine 32 adopt a coiled-coil conformation.

It belongs to the DNAAF19/PR46b family. As to quaternary structure, homodimer.

It is found in the cytoplasm. The protein resides in the cell projection. Its subcellular location is the cilium. The protein localises to the flagellum. Dynein-attachment factor required for cilia motility. The protein is Dynein axonemal assembly factor 19 (dnaaf19) of Xenopus tropicalis (Western clawed frog).